The following is a 1288-amino-acid chain: 5-oxoprolinase (1288 aa).

Positions 1248-1270 (PGGGGYGDPEDPAPPPGSPPLFP) are disordered. The segment covering 1259–1270 (PAPPPGSPPLFP) has biased composition (pro residues). A Phosphoserine modification is found at Ser-1265.

It belongs to the oxoprolinase family. As to quaternary structure, homodimer. As to expression, expressed in testis, kidney and liver.

It is found in the cytoplasm. It localises to the cytosol. The catalysed reaction is 5-oxo-L-proline + ATP + 2 H2O = L-glutamate + ADP + phosphate + H(+). In terms of biological role, catalyzes the cleavage of 5-oxo-L-proline to form L-glutamate coupled to the hydrolysis of ATP to ADP and inorganic phosphate. This Rattus norvegicus (Rat) protein is 5-oxoprolinase (Oplah).